Reading from the N-terminus, the 251-residue chain is tRNA (guanine-N(1)-)-methyltransferase (251 aa).

S-adenosyl-L-methionine-binding positions include Gly117 and 137-142; that span reads IGDYVL.

This sequence belongs to the RNA methyltransferase TrmD family. As to quaternary structure, homodimer.

It is found in the cytoplasm. The enzyme catalyses guanosine(37) in tRNA + S-adenosyl-L-methionine = N(1)-methylguanosine(37) in tRNA + S-adenosyl-L-homocysteine + H(+). Its function is as follows. Specifically methylates guanosine-37 in various tRNAs. The chain is tRNA (guanine-N(1)-)-methyltransferase from Actinobacillus pleuropneumoniae serotype 5b (strain L20).